The chain runs to 294 residues: NADH-cytochrome b5 reductase 2 (294 aa).

A helical transmembrane segment spans residues 11–27; sequence VLLPVVAAATSIGLVYH. Residues 45–149 enclose the FAD-binding FR-type domain; that stretch reads DEWIDLKLKK…KGPIVKWKWE (105 aa). Residue 152-187 participates in FAD binding; sequence QFQSIALIGGGTGITPLYQLLHEITKNPEDKTKVKL.

This sequence belongs to the flavoprotein pyridine nucleotide cytochrome reductase family. It depends on FAD as a cofactor.

The protein localises to the mitochondrion outer membrane. The catalysed reaction is 2 Fe(III)-[cytochrome b5] + NADH = 2 Fe(II)-[cytochrome b5] + NAD(+) + H(+). Its function is as follows. May mediate the reduction of outer membrane cytochrome b5. This is NADH-cytochrome b5 reductase 2 (MCR1) from Meyerozyma guilliermondii (strain ATCC 6260 / CBS 566 / DSM 6381 / JCM 1539 / NBRC 10279 / NRRL Y-324) (Yeast).